Consider the following 264-residue polypeptide: Mannose-specific lectin CEA (264 aa).

Residues methionine 1–alanine 23 form the signal peptide. Bulb-type lectin domains lie at threonine 26 to proline 131 and asparagine 145 to lysine 252. Residues glutamine 51–asparagine 55, tyrosine 59, tryptophan 63, glutamine 64, glutamine 170–asparagine 174, tyrosine 178, and tyrosine 182–glutamine 185 each bind beta-D-mannose. The Carbohydrate-binding motif 1 signature appears at glutamine 51–tyrosine 59. Disulfide bonds link cysteine 54–cysteine 74 and cysteine 173–cysteine 195. The short motif at glutamine 170–tyrosine 178 is the Carbohydrate-binding motif 2 element.

In terms of assembly, forms heterotetramer of 2 chains 1 and 2 chains 2 arranged as a dimer of chain 1 and chain 2 heterodimers.

The protein localises to the secreted. Functionally, mannose-specific lectin. Shows agglutinating activity towards erythrocytes from rabbit. Has insecticidal activity against cotton aphids and other hemipteran insects. The polypeptide is Mannose-specific lectin CEA (Colocasia esculenta (Wild taro)).